The following is an 806-amino-acid chain: Protein translocase subunit SecA (806 aa).

ATP-binding positions include Gln-87, 105-109, and Asp-493; that span reads GEGKT.

This sequence belongs to the SecA family. In terms of assembly, monomer and homodimer. Part of the essential Sec protein translocation apparatus which comprises SecA, SecYEG and auxiliary proteins SecDF. Other proteins may also be involved.

It localises to the cell membrane. It is found in the cytoplasm. The enzyme catalyses ATP + H2O + cellular proteinSide 1 = ADP + phosphate + cellular proteinSide 2.. Functionally, part of the Sec protein translocase complex. Interacts with the SecYEG preprotein conducting channel. Has a central role in coupling the hydrolysis of ATP to the transfer of proteins into and across the cell membrane, serving as an ATP-driven molecular motor driving the stepwise translocation of polypeptide chains across the membrane. The polypeptide is Protein translocase subunit SecA (Mycoplasma genitalium (strain ATCC 33530 / DSM 19775 / NCTC 10195 / G37) (Mycoplasmoides genitalium)).